Consider the following 424-residue polypeptide: Tyrosine--tRNA ligase 1 (424 aa).

Tyr37 serves as a coordination point for L-tyrosine. A 'HIGH' region motif is present at residues 42–51; it reads PTADSLHLGH. Residues Tyr175 and Gln179 each contribute to the L-tyrosine site. The 'KMSKS' region motif lies at 235–239; it reads KFGKT. Lys238 provides a ligand contact to ATP. In terms of domain architecture, S4 RNA-binding spans 357 to 414; sequence ADLQQALVNAGLVPSRGQARTMISSNAVAINGEKQSEPEYLFTDSNRLFDRYTLLRRG.

This sequence belongs to the class-I aminoacyl-tRNA synthetase family. TyrS type 1 subfamily. Homodimer.

It is found in the cytoplasm. The enzyme catalyses tRNA(Tyr) + L-tyrosine + ATP = L-tyrosyl-tRNA(Tyr) + AMP + diphosphate + H(+). Its function is as follows. Catalyzes the attachment of tyrosine to tRNA(Tyr) in a two-step reaction: tyrosine is first activated by ATP to form Tyr-AMP and then transferred to the acceptor end of tRNA(Tyr). This chain is Tyrosine--tRNA ligase 1, found in Photorhabdus laumondii subsp. laumondii (strain DSM 15139 / CIP 105565 / TT01) (Photorhabdus luminescens subsp. laumondii).